The sequence spans 309 residues: Porphobilinogen deaminase (309 aa).

Residue Cys244 is modified to S-(dipyrrolylmethanemethyl)cysteine.

This sequence belongs to the HMBS family. As to quaternary structure, monomer. It depends on dipyrromethane as a cofactor.

It catalyses the reaction 4 porphobilinogen + H2O = hydroxymethylbilane + 4 NH4(+). It participates in porphyrin-containing compound metabolism; protoporphyrin-IX biosynthesis; coproporphyrinogen-III from 5-aminolevulinate: step 2/4. Its function is as follows. Tetrapolymerization of the monopyrrole PBG into the hydroxymethylbilane pre-uroporphyrinogen in several discrete steps. This Listeria welshimeri serovar 6b (strain ATCC 35897 / DSM 20650 / CCUG 15529 / CIP 8149 / NCTC 11857 / SLCC 5334 / V8) protein is Porphobilinogen deaminase.